The sequence spans 499 residues: Gamma-aminobutyric acid receptor subunit beta (499 aa).

The N-terminal stretch at 1-23 (MWGIIVPFFSASLMCSLVAVVRC) is a signal peptide. Over 24 to 251 (QQDTDHFANV…IFQLQRNIGY (228 aa)) the chain is Extracellular. N-linked (GlcNAc...) asparagine glycans are attached at residues Asn32, Asn98, Asn106, and Asn152. A disulfide bridge links Cys167 with Cys181. A run of 3 helical transmembrane segments spans residues 252–273 (FIFQ…SFWI), 278–299 (TSAR…SNGV), and 311–333 (AIDI…YAAV). The Cytoplasmic segment spans residues 334 to 475 (NYTYWGARAK…RVQDVNTIDK (142 aa)). Residues 476 to 499 (YARLMFPLLFIIFNTSYWSVYLLT) form a helical membrane-spanning segment.

Belongs to the ligand-gated ion channel (TC 1.A.9) family. Gamma-aminobutyric acid receptor (TC 1.A.9.5) subfamily. In terms of assembly, generally pentameric. There are five types of GABA(A) receptor chains: alpha, beta, gamma, delta, and rho.

It is found in the postsynaptic cell membrane. The protein resides in the cell membrane. Its function is as follows. GABA, an inhibitory neurotransmitter, mediates neuronal inhibition by binding to the GABA/benzodiazepine receptor and opening an integral chloride channel. This chain is Gamma-aminobutyric acid receptor subunit beta, found in Lymnaea stagnalis (Great pond snail).